A 511-amino-acid polypeptide reads, in one-letter code: Bifunctional purine biosynthesis protein PurH (511 aa).

One can recognise an MGS-like domain in the interval 1–145 (MKKRALVSVS…KNHKFVSVIV (145 aa)).

Belongs to the PurH family.

The enzyme catalyses (6R)-10-formyltetrahydrofolate + 5-amino-1-(5-phospho-beta-D-ribosyl)imidazole-4-carboxamide = 5-formamido-1-(5-phospho-D-ribosyl)imidazole-4-carboxamide + (6S)-5,6,7,8-tetrahydrofolate. It carries out the reaction IMP + H2O = 5-formamido-1-(5-phospho-D-ribosyl)imidazole-4-carboxamide. The protein operates within purine metabolism; IMP biosynthesis via de novo pathway; 5-formamido-1-(5-phospho-D-ribosyl)imidazole-4-carboxamide from 5-amino-1-(5-phospho-D-ribosyl)imidazole-4-carboxamide (10-formyl THF route): step 1/1. Its pathway is purine metabolism; IMP biosynthesis via de novo pathway; IMP from 5-formamido-1-(5-phospho-D-ribosyl)imidazole-4-carboxamide: step 1/1. The protein is Bifunctional purine biosynthesis protein PurH of Bacillus thuringiensis subsp. konkukian (strain 97-27).